We begin with the raw amino-acid sequence, 111 residues long: Glutaredoxin-C2 (111 aa).

Residues 3-103 (MQKAKEIVNS…PLLTEAGAIA (101 aa)) enclose the Glutaredoxin domain. An intrachain disulfide couples cysteine 23 to cysteine 26.

The protein belongs to the glutaredoxin family. CPYC subfamily.

Its subcellular location is the cytoplasm. Has a glutathione-disulfide oxidoreductase activity in the presence of NADPH and glutathione reductase. Reduces low molecular weight disulfides and proteins. This is Glutaredoxin-C2 (GRXC2) from Arabidopsis thaliana (Mouse-ear cress).